The primary structure comprises 159 residues: Ascorbate-specific PTS system EIIA component (159 aa).

Residues 9-152 enclose the PTS EIIA type-2 domain; the sequence is VLKQHHTVRL…TSLFAVIDRV (144 aa). H71 serves as the catalytic Tele-phosphohistidine intermediate. A Phosphohistidine modification is found at H71.

The protein resides in the cytoplasm. In terms of biological role, the phosphoenolpyruvate-dependent sugar phosphotransferase system (sugar PTS), a major carbohydrate active transport system, catalyzes the phosphorylation of incoming sugar substrates concomitantly with their translocation across the cell membrane. The enzyme II UlaABC PTS system is involved in ascorbate transport. This chain is Ascorbate-specific PTS system EIIA component (ulaC), found in Mycoplasma pneumoniae (strain ATCC 29342 / M129 / Subtype 1) (Mycoplasmoides pneumoniae).